The chain runs to 81 residues: Photosystem I iron-sulfur center (81 aa).

4Fe-4S ferredoxin-type domains lie at 2–31 (SHSV…MVAW) and 39–68 (IASA…VRVY). Cysteine 11, cysteine 14, cysteine 17, cysteine 21, cysteine 48, cysteine 51, cysteine 54, and cysteine 58 together coordinate [4Fe-4S] cluster.

The eukaryotic PSI reaction center is composed of at least 11 subunits. Requires [4Fe-4S] cluster as cofactor.

It is found in the plastid. Its subcellular location is the chloroplast thylakoid membrane. It carries out the reaction reduced [plastocyanin] + hnu + oxidized [2Fe-2S]-[ferredoxin] = oxidized [plastocyanin] + reduced [2Fe-2S]-[ferredoxin]. In terms of biological role, apoprotein for the two 4Fe-4S centers FA and FB of photosystem I (PSI); essential for photochemical activity. FB is the terminal electron acceptor of PSI, donating electrons to ferredoxin. The C-terminus interacts with PsaA/B/D and helps assemble the protein into the PSI complex. Required for binding of PsaD and PsaE to PSI. PSI is a plastocyanin/cytochrome c6-ferredoxin oxidoreductase, converting photonic excitation into a charge separation, which transfers an electron from the donor P700 chlorophyll pair to the spectroscopically characterized acceptors A0, A1, FX, FA and FB in turn. This Guillardia theta (Cryptophyte) protein is Photosystem I iron-sulfur center.